We begin with the raw amino-acid sequence, 156 residues long: Small ribosomal subunit protein uS7 (156 aa).

Belongs to the universal ribosomal protein uS7 family. Part of the 30S ribosomal subunit. Contacts proteins S9 and S11.

One of the primary rRNA binding proteins, it binds directly to 16S rRNA where it nucleates assembly of the head domain of the 30S subunit. Is located at the subunit interface close to the decoding center, probably blocks exit of the E-site tRNA. In Paenarthrobacter aurescens (strain TC1), this protein is Small ribosomal subunit protein uS7.